Reading from the N-terminus, the 286-residue chain is Cytosolic 5'-nucleotidase 3 (286 aa).

Residue Asp38 is the Nucleophile of the active site. Asp38 and Asp40 together coordinate Mg(2+). Residue Asp40 is the Proton donor of the active site. Substrate contacts are provided by residues Glu85, Ser106, 153–154 (SA), and Lys202. Residue Asp227 participates in Mg(2+) binding.

It belongs to the pyrimidine 5'-nucleotidase family.

It is found in the cytoplasm. It catalyses the reaction a ribonucleoside 5'-phosphate + H2O = a ribonucleoside + phosphate. Can act both as nucleotidase and as phosphotransferase. This is Cytosolic 5'-nucleotidase 3 (nt5c3) from Danio rerio (Zebrafish).